Here is a 553-residue protein sequence, read N- to C-terminus: Coiled-coil domain-containing protein 85A (553 aa).

The span at methionine 1–alanine 28 shows a compositional bias: low complexity. The disordered stretch occupies residues methionine 1–serine 37. 2 coiled-coil regions span residues glutamate 43–cysteine 109 and methionine 137–cysteine 169. Disordered stretches follow at residues tyrosine 203–glutamate 414, glutamate 433–serine 461, and serine 491–proline 518. The span at aspartate 209–aspartate 220 shows a compositional bias: low complexity. Residues histidine 236–glutamine 260 are compositionally biased toward basic and acidic residues. The segment covering glycine 376–arginine 389 has biased composition (gly residues). Residues glycine 391 to proline 403 show a composition bias toward basic and acidic residues. A coiled-coil region spans residues methionine 412–asparagine 443. The span at glutamine 439–methionine 455 shows a compositional bias: polar residues. Over residues serine 491–glycine 508 the composition is skewed to low complexity. Arginine 541 carries the post-translational modification Asymmetric dimethylarginine.

Belongs to the CCDC85 family. In terms of assembly, may interact with ARVCF; CTNND1; CTNND2 and PKP4.

The protein localises to the cell junction. Its subcellular location is the adherens junction. Functionally, may play a role in cell-cell adhesion and epithelium development through its interaction with proteins of the beta-catenin family. The sequence is that of Coiled-coil domain-containing protein 85A (CCDC85A) from Homo sapiens (Human).